Consider the following 1072-residue polypeptide: DNA-directed RNA polymerase subunit beta (1072 aa).

Belongs to the RNA polymerase beta chain family. In plastids the minimal PEP RNA polymerase catalytic core is composed of four subunits: alpha, beta, beta', and beta''. When a (nuclear-encoded) sigma factor is associated with the core the holoenzyme is formed, which can initiate transcription.

It is found in the plastid. The protein localises to the chloroplast. It catalyses the reaction RNA(n) + a ribonucleoside 5'-triphosphate = RNA(n+1) + diphosphate. In terms of biological role, DNA-dependent RNA polymerase catalyzes the transcription of DNA into RNA using the four ribonucleoside triphosphates as substrates. This chain is DNA-directed RNA polymerase subunit beta, found in Olimarabidopsis pumila (Dwarf rocket).